We begin with the raw amino-acid sequence, 156 residues long: Ribonuclease pancreatic (156 aa).

A signal peptide spans 1–28; it reads MALEKSLVLLPLLVLALLVLGWIQPSLG. The substrate site is built by Lys35 and Arg38. His40 serves as the catalytic Proton acceptor. 4 disulfides stabilise this stretch: Cys54/Cys112, Cys68/Cys123, Cys86/Cys138, and Cys93/Cys100. Residue Asn62 is glycosylated (N-linked (GlcNAc...) asparagine). 69–73 serves as a coordination point for substrate; the sequence is KPVNT. N-linked (GlcNAc...) asparagine glycosylation is present at Asn90. Residue Lys94 coordinates substrate. N-linked (GlcNAc...) asparagine glycosylation is present at Asn104. Arg113 provides a ligand contact to substrate. His147 (proton donor) is an active-site residue.

The protein belongs to the pancreatic ribonuclease family. Monomer. Interacts with and forms tight 1:1 complexes with RNH1. Dimerization of two such complexes may occur. Interaction with RNH1 inhibits this protein.

It is found in the secreted. The catalysed reaction is an [RNA] containing cytidine + H2O = an [RNA]-3'-cytidine-3'-phosphate + a 5'-hydroxy-ribonucleotide-3'-[RNA].. The enzyme catalyses an [RNA] containing uridine + H2O = an [RNA]-3'-uridine-3'-phosphate + a 5'-hydroxy-ribonucleotide-3'-[RNA].. In terms of biological role, endonuclease that catalyzes the cleavage of RNA on the 3' side of pyrimidine nucleotides. Acts on single-stranded and double-stranded RNA. The protein is Ribonuclease pancreatic (RNASE1) of Lemur catta (Ring-tailed lemur).